The primary structure comprises 545 residues: MSYSIGIDYGTASGRVFLINTTNGQVVSKFVKPYTHGVIESELNGLKIPHTYALQNSNDYLEIMEEGISYIVRESKIDPVNIVGIGIDFTSSTIIFTDENINPVHNLKQFKNNPHAYVKLWKHHGAYKEAEKLYQTAIENNNKWLGHYGYNVSSEWMIPKIMEVMNRAPEIMEKTAYIMEAGDWIVNKLTNKNVRSNCGLGFKAFWEEETGFHYDLFDKIDPKLSKVIQDKVSAPVVNIGEAVGKLDDKMAQKLGLSKETMVSPFIIDAHASLLGIGSEKDKEMTMVLGTSTCHLMLNEKQHQVPGISGSVKGAIIPELFAYEAGQSAVGDLFEYVAKQAPKSYVDEAANRNMTVFELMNEKIKHQMPGESGLIALDWHNGNRSVLSDSNLTGCIFGLTLQTKHEDIYRAYLEATAFGTKMIMQQYQDWHMEVEKVFACGGIPKKNAVMMDIYANVLNKKLIVMDSEYAPAIGAAILGAVSGGAHNSINDAVDAMKEPILYEINPEAEKVQRYETLFKAYKALHDIHGYKKANIMKDIQSLRVEG.

This sequence belongs to the ribulokinase family.

The catalysed reaction is D-ribulose + ATP = D-ribulose 5-phosphate + ADP + H(+). It catalyses the reaction L-ribulose + ATP = L-ribulose 5-phosphate + ADP + H(+). It participates in carbohydrate degradation; L-arabinose degradation via L-ribulose; D-xylulose 5-phosphate from L-arabinose (bacterial route): step 2/3. The chain is Ribulokinase from Staphylococcus aureus (strain bovine RF122 / ET3-1).